Here is a 333-residue protein sequence, read N- to C-terminus: Beta-ketoacyl-[acyl-carrier-protein] synthase III (333 aa).

Catalysis depends on residues Cys116 and His258. Residues 259–263 (QANKR) form an ACP-binding region. Asn288 is an active-site residue.

This sequence belongs to the thiolase-like superfamily. FabH family. In terms of assembly, homodimer.

It localises to the cytoplasm. It carries out the reaction malonyl-[ACP] + acetyl-CoA + H(+) = 3-oxobutanoyl-[ACP] + CO2 + CoA. The protein operates within lipid metabolism; fatty acid biosynthesis. In terms of biological role, catalyzes the condensation reaction of fatty acid synthesis by the addition to an acyl acceptor of two carbons from malonyl-ACP. Catalyzes the first condensation reaction which initiates fatty acid synthesis and may therefore play a role in governing the total rate of fatty acid production. Possesses both acetoacetyl-ACP synthase and acetyl transacylase activities. Its substrate specificity determines the biosynthesis of branched-chain and/or straight-chain of fatty acids. This is Beta-ketoacyl-[acyl-carrier-protein] synthase III from Koribacter versatilis (strain Ellin345).